An 84-amino-acid chain; its full sequence is Inactive transposase YbfQ (84 aa).

The sequence is that of Inactive transposase YbfQ (ybfQ) from Escherichia coli (strain K12).